Reading from the N-terminus, the 404-residue chain is MAAVPELLEQQEEDRSKLRSVSVDLNVDPSLQIDIPDALSERDKVKFTVHTKTTLSTFQSPEFSVTRQHEDFVWLHDTLTETTDYAGLIIPPAPTKPDFDGPREKMQKLGEGEGSMTKEEFAKMKQELEAEYLAVFKKTVSTHEVFLQRLSSHPVLSKDRNFHVFLEYDQDLSVRRKNTKEMFGGFFKSVVKSADEVLFSGVKEVDDFFEQEKNFLINYYNRIKDSCAKADKMTRSHKNVADDYIHTAACLHSLALEEPTVIKKYLLKVAELFEKLRKVEGRVSSDEDLKLTELLRYYMLNIEAAKDLLYRRTKALIDYENSNKALDKARLKSKDVKLAETHQQECCQKFEQLSESAKEELINFKRKRVAAFRKNLIEMSELEIKHARNNVSLLQSCIDLFKNN.

Residue Ala2 is modified to N-acetylalanine. Residues 25 to 172 (LNVDPSLQID…HVFLEYDQDL (148 aa)) enclose the PX domain. A 1,2-diacyl-sn-glycero-3-phospho-(1D-myo-inositol-4,5-bisphosphate) contacts are provided by residues 40-46 (SERDKVK), 99-105 (FDGPREK), and 113-116 (EGSM). Positions 169 to 261 (DQDLSVRRKN…HSLALEEPTV (93 aa)) are interaction with DOCK1. The tract at residues 183-200 (FGGFFKSVVKSADEVLFS) is membrane-binding amphipathic helix. Position 193 is a phosphoserine (Ser193). Residues 202–404 (VKEVDDFFEQ…QSCIDLFKNN (203 aa)) enclose the BAR domain. Lys275 carries the N6-acetyllysine modification.

This sequence belongs to the sorting nexin family. In terms of assembly, forms heterodimers with BAR domain-containing sorting nexins SNX1 and SNX2; does not homodimerize. The heterodimers are proposed to self-assemble into helical arrays on the membrane to stabilize and expand local membrane curvature underlying endosomal tubule formation. Thought to be a component of the originally described retromer complex (also called SNX-BAR retromer) which is a pentamer containing the heterotrimeric retromer cargo-selective complex (CSC), also described as vacuolar protein sorting subcomplex (VPS), and a heterodimeric membrane-deforming subcomplex formed between SNX1 or SNX2 and SNX5 or SNX6 (also called SNX-BAR subcomplex); the respective CSC and SNX-BAR subcomplexes associate with low affinity. Interacts with SNX1, SNX2, VPS26A, VPS29, VPS35, DCTN1, DOCK1, MIB1, PIP5K1C. Interacts with HGS; increased by PIP5K1C kinase activity and by PtdIns(3P) and/or PtdIns(3,4)P2. Detected in macrophages (at protein level).

The protein localises to the endosome. It localises to the early endosome. The protein resides in the early endosome membrane. It is found in the cell membrane. Its subcellular location is the cytoplasmic vesicle membrane. The protein localises to the cytoplasm. It localises to the cell projection. The protein resides in the phagocytic cup. It is found in the ruffle. Functionally, involved in several stages of intracellular trafficking. Interacts with membranes containing phosphatidylinositol lipids. Acts in part as component of the retromer membrane-deforming SNX-BAR subcomplex. The SNX-BAR retromer mediates retrograde transport of cargo proteins from endosomes to the trans-Golgi network (TGN) and is involved in endosome-to-plasma membrane transport for cargo protein recycling. The SNX-BAR subcomplex functions to deform the donor membrane into a tubular profile called endosome-to-TGN transport carrier (ETC). Does not have in vitro vesicle-to-membrane remodeling activity. Involved in retrograde transport of lysosomal enzyme receptor IGF2R. May function as link between endosomal transport vesicles and dynactin. Plays a role in the internalization of EGFR after EGF stimulation. Involved in EGFR endosomal sorting and degradation; the function involves PIP5K1C and is retromer-independent. Together with PIP5K1C facilitates HGS interaction with ubiquitinated EGFR, which initiates EGFR sorting to intraluminal vesicles (ILVs) of the multivesicular body for subsequent lysosomal degradation. Involved in E-cadherin sorting and degradation; inhibits PIP5K1C-mediated E-cadherin degradation. Plays a role in macropinocytosis. The chain is Sorting nexin-5 (Snx5) from Mus musculus (Mouse).